The following is a 745-amino-acid chain: F-box only protein 30 (745 aa).

Residues 48–109 (EHRLLCPFER…SYADRKSYEN (62 aa)) form a TRAF-type zinc finger. Disordered stretches follow at residues 211–231 (NTSV…LEDQ) and 305–324 (GDSK…SDGT). Residues 222-231 (QNARESLEDQ) are compositionally biased toward basic and acidic residues. The span at 305-314 (GDSKQSNLTN) shows a compositional bias: polar residues. The 49-residue stretch at 610-658 (NDHLSSLPFEVLQHIAGFLDGFSLCQLSCVSKLMRDVCGSLLQSRGMVI) folds into the F-box domain.

Part of a SCF (SKP1-cullin-F-box) protein ligase complex. Interacts with SKP1, CUL1 and RBX1/ROC1. Auto-ubiquitinated. Post-translationally, may be neddylated. Neddylation may be required for E3 ligase activity.

The protein operates within protein modification; protein ubiquitination. Substrate-recognition component of the SCF (SKP1-CUL1-F-box protein)-type E3 ubiquitin ligase complex. Required for muscle atrophy following denervation. This chain is F-box only protein 30 (FBXO30), found in Homo sapiens (Human).